A 28-amino-acid chain; its full sequence is Potassium channel toxin alpha-KTx 9.3 (28 aa).

3 disulfide bridges follow: C3-C19, C6-C24, and C10-C26.

It belongs to the short scorpion toxin superfamily. Potassium channel inhibitor family. Alpha-KTx 09 subfamily. As to expression, expressed by the venom gland.

It localises to the secreted. In terms of biological role, inhibits voltage-gated potassium channels. In Aegaeobuthus nigrocinctus (Scorpion), this protein is Potassium channel toxin alpha-KTx 9.3.